The sequence spans 236 residues: RNA-binding protein 24 (236 aa).

The RRM domain maps to 11 to 88; that stretch reads TKIFVGGLPY…RKANVNLAYL (78 aa). The interval 175–199 is necessary for interaction with EIF4E; the sequence is QYPYAASPAAAGYVTTGGYSYAVQQ.

In terms of assembly, interacts with EIF4E; this interaction prevents EIF4E from binding to p53/TP53 mRNA and inhibits the assembly of translation initiation complex. In terms of tissue distribution, expressed strongly in heart and skeletal muscles. Weakly expressed in intestine, aorta, liver, lung, kidney, uterus and bladder.

It is found in the nucleus. The protein resides in the cytoplasm. Multifunctional RNA-binding protein involved in the regulation of pre-mRNA splicing, mRNA stability and mRNA translation important for cell fate decision and differentiation. Plays a major role in pre-mRNA alternative splicing regulation. Mediates preferentially muscle-specific exon inclusion in numerous mRNAs important for striated cardiac and skeletal muscle cell differentiation. Binds to intronic splicing enhancer (ISE) composed of stretches of GU-rich motifs localized in flanking intron of exon that will be included by alternative splicing. Involved in embryonic stem cell (ESC) transition to cardiac cell differentiation by promoting pre-mRNA alternative splicing events of several pluripotency and/or differentiation genes. Plays a role in the regulation of mRNA stability. Binds to 3'-untranslated region (UTR) AU-rich elements in target transcripts, such as CDKN1A and MYOG, leading to maintain their stabilities. Involved in myogenic differentiation by regulating MYOG levels. Binds to multiple regions in the mRNA 3'-UTR of TP63, hence inducing its destabilization. Also promotes the destabilization of the CHRM2 mRNA via its binding to a region in the coding sequence. Plays a role in the regulation of mRNA translation. Mediates repression of p53/TP53 mRNA translation through its binding to U-rich element in the 3'-UTR, hence preventing EIF4E from binding to p53/TP53 mRNA and translation initiation. Binds to a huge amount of mRNAs. Required for embryonic heart development, sarcomer and M-band formation in striated muscles. Together with RBM20, promotes the expression of short isoforms of PDLIM5/ENH in cardiomyocytes. The chain is RNA-binding protein 24 from Mus musculus (Mouse).